Reading from the N-terminus, the 79-residue chain is Translational regulator CsrA (79 aa).

The protein belongs to the CsrA/RsmA family. Homodimer; the beta-strands of each monomer intercalate to form a hydrophobic core, while the alpha-helices form wings that extend away from the core.

It localises to the cytoplasm. Its function is as follows. A translational regulator that binds mRNA to regulate translation initiation and/or mRNA stability. Usually binds in the 5'-UTR at or near the Shine-Dalgarno sequence preventing ribosome-binding, thus repressing translation. Its main target seems to be the major flagellin gene, while its function is anatagonized by FliW. The sequence is that of Translational regulator CsrA from Solidesulfovibrio magneticus (strain ATCC 700980 / DSM 13731 / RS-1) (Desulfovibrio magneticus).